We begin with the raw amino-acid sequence, 273 residues long: Histidine racemase (273 aa).

The Proton acceptor role is filled by Cys72. Cys211 (proton donor) is an active-site residue.

It belongs to the histidine racemase family. As to quaternary structure, homodimer.

It localises to the cytoplasm. The enzyme catalyses L-histidine = D-histidine. Functionally, isomerase that catalyzes the conversion of L-histidine to D-histidine. Functions the biosynthesis of the metallophore staphylopine, which is involved in the acquisition of nickel, cobalt, zinc, copper, and iron, and thus enables bacterial growth inside the host, where metal access is limited. Therefore, this enzyme probably contributes to staphylococcal virulence. The reaction is reversible in vitro, the enzyme can produce D-histidine from the L-stereoisomer and vice versa. Appears to be specific for histidine as it cannot use other amino acids as substrate, including L-alanine and L-methionine. This Staphylococcus aureus (strain Mu50 / ATCC 700699) protein is Histidine racemase.